The following is a 1047-amino-acid chain: Error-prone DNA polymerase (1047 aa).

Belongs to the DNA polymerase type-C family. DnaE2 subfamily.

It localises to the cytoplasm. The enzyme catalyses DNA(n) + a 2'-deoxyribonucleoside 5'-triphosphate = DNA(n+1) + diphosphate. In terms of biological role, DNA polymerase involved in damage-induced mutagenesis and translesion synthesis (TLS). It is not the major replicative DNA polymerase. The polypeptide is Error-prone DNA polymerase (Methylococcus capsulatus (strain ATCC 33009 / NCIMB 11132 / Bath)).